An 84-amino-acid chain; its full sequence is ATP synthase subunit c (84 aa).

Transmembrane regions (helical) follow at residues 9 to 29 (IIAS…GFAI) and 54 to 74 (IVAG…LLFI).

It belongs to the ATPase C chain family. As to quaternary structure, F-type ATPases have 2 components, F(1) - the catalytic core - and F(0) - the membrane proton channel. F(1) has five subunits: alpha(3), beta(3), gamma(1), delta(1), epsilon(1). F(0) has three main subunits: a(1), b(2) and c(10-14). The alpha and beta chains form an alternating ring which encloses part of the gamma chain. F(1) is attached to F(0) by a central stalk formed by the gamma and epsilon chains, while a peripheral stalk is formed by the delta and b chains.

Its subcellular location is the cell inner membrane. Its function is as follows. F(1)F(0) ATP synthase produces ATP from ADP in the presence of a proton or sodium gradient. F-type ATPases consist of two structural domains, F(1) containing the extramembraneous catalytic core and F(0) containing the membrane proton channel, linked together by a central stalk and a peripheral stalk. During catalysis, ATP synthesis in the catalytic domain of F(1) is coupled via a rotary mechanism of the central stalk subunits to proton translocation. In terms of biological role, key component of the F(0) channel; it plays a direct role in translocation across the membrane. A homomeric c-ring of between 10-14 subunits forms the central stalk rotor element with the F(1) delta and epsilon subunits. This chain is ATP synthase subunit c, found in Pasteurella multocida (strain Pm70).